The sequence spans 304 residues: Protoheme IX farnesyltransferase 2 (304 aa).

The next 9 membrane-spanning stretches (helical) occupy residues 28–48 (VVALMLITAVVGMSLAPVVDF), 50–70 (WLQAAFGLVGIGLMAGSAAAF), 98–118 (ISVAIFSTALGVIGFVLLYAL), 122–142 (LTAWMTFLSLLGYAVVYTMYL), 150–170 (IVIAGIAGAMPPLLGWTAVTG), 176–196 (AWLLVMIIFIWTPPHFWAIAI), 223–243 (ILLYTILLTLVCILPVLVGMV), 245–265 (SVYLFSSLLLNAGFMYHAWKL), and 282–302 (IYHLLALFVALLADHYLGLFF).

Belongs to the UbiA prenyltransferase family. Protoheme IX farnesyltransferase subfamily.

It localises to the cell inner membrane. The enzyme catalyses heme b + (2E,6E)-farnesyl diphosphate + H2O = Fe(II)-heme o + diphosphate. It participates in porphyrin-containing compound metabolism; heme O biosynthesis; heme O from protoheme: step 1/1. Converts heme B (protoheme IX) to heme O by substitution of the vinyl group on carbon 2 of heme B porphyrin ring with a hydroxyethyl farnesyl side group. In Vibrio campbellii (strain ATCC BAA-1116), this protein is Protoheme IX farnesyltransferase 2.